Here is a 1141-residue protein sequence, read N- to C-terminus: cGMP-inhibited 3',5'-cyclic phosphodiesterase 3A (1141 aa).

A disordered region spans residues 1–41; the sequence is MAVRGEAAQDWAKPGLRGPSPAPVARGDHRCRGGSPSSPRG. Residues 62 to 82 traverse the membrane as a helical segment; it reads SALCAGSLSVLLALLVRLVGG. The segment at 89-111 is disordered; sequence ESSQEAAAEEEEEEGARGGVFPG. 5 helical membrane-spanning segments follow: residues 127–147, 157–177, 182–202, 207–227, and 229–249; these read LQPAALLFSLLCAFFWMGLCL, AVALLAACCAGEALVQLSLGV, LLSLPAAGVLLSCLGGATWLV, LGVLMVALTSALRTVALVSLE, and FKVAWRPYLAYLAAVLGLLLA. The tract at residues 262-309 is disordered; sequence PAPPRERFGSQSSARTKEEIPGWKRRRRSSSVVAGEMSGCGGKSHRRT. S310 is modified (phosphoserine). Positions 433-445 are enriched in low complexity; the sequence is RVSSTWTTTTSAT. Residues 433-479 are disordered; sequence RVSSTWTTTTSATGLPTLEPAPVRRDRSASIKPHEAPSPSAVNPDSW. A compositionally biased stretch (basic and acidic residues) spans 454-467; it reads PVRRDRSASIKPHE. 4 positions are modified to phosphoserine: S492, S520, S524, and S533. A disordered region spans residues 504–643; sequence HVKAKKQNRP…SDILQNDEEA (140 aa). The segment covering 522-532 has biased composition (pro residues); sequence VPSPSSSPPQG. The span at 618-637 shows a compositional bias: polar residues; sequence TSQVTSDYETNNNSDSSDIL. Positions 669-1141 are interaction with SLFN12; that stretch reads KPILAPEPLV…EETLAPQPDL (473 aa). In terms of domain architecture, PDEase spans 674-1093; it reads PEPLVMDNLD…MMWKKVIEEE (420 aa). The Proton donor role is filled by H752. H752 contributes to the AMP binding site. 4 residues coordinate Mn(2+): H756, H836, D837, and D950. Residues D837, D950, and Q1001 each coordinate AMP. A Mg(2+)-binding site is contributed by D837. Disordered stretches follow at residues 1024 to 1062 and 1098 to 1141; these read GKWVDDSDDSGDTDDPEEEEEEAETPHEEETCENSEAPR and GTEN…QPDL. The span at 1029–1046 shows a compositional bias: acidic residues; that stretch reads DSDDSGDTDDPEEEEEEA. S1033 carries the phosphoserine modification. T1036 is subject to Phosphothreonine. A compositionally biased stretch (polar residues) spans 1098 to 1113; sequence GTENQAPDQAPLQHSS. K1120 participates in a covalent cross-link: Glycyl lysine isopeptide (Lys-Gly) (interchain with G-Cter in SUMO2).

This sequence belongs to the cyclic nucleotide phosphodiesterase family. PDE3 subfamily. Homodimer. Interacts with PDE3A; direct low affinity interaction which is stimulated by binding of 17beta-estradiol/E2 to PDE3A and that positively regulates the ribonuclease activity of SLFN12. It depends on Mn(2+) as a cofactor. Requires Mg(2+) as cofactor.

The protein resides in the membrane. It is found in the cytoplasm. The protein localises to the cytosol. The catalysed reaction is a nucleoside 3',5'-cyclic phosphate + H2O = a nucleoside 5'-phosphate + H(+). The enzyme catalyses 3',5'-cyclic AMP + H2O = AMP + H(+). It catalyses the reaction 3',5'-cyclic GMP + H2O = GMP + H(+). It carries out the reaction 3',5'-cyclic UMP + H2O = UMP + H(+). Cyclic nucleotide phosphodiesterase with specificity for the second messengers cAMP and cGMP, which are key regulators of many important physiological processes. Also has activity toward cUMP. Independently of its catalytic activity it is part of an E2/17beta-estradiol-induced pro-apoptotic signaling pathway. E2 stabilizes the PDE3A/SLFN12 complex in the cytosol, promoting the dephosphorylation of SLFN12 and activating its pro-apoptotic ribosomal RNA/rRNA ribonuclease activity. This apoptotic pathway might be relevant in tissues with high concentration of E2 and be for instance involved in placenta remodeling. The protein is cGMP-inhibited 3',5'-cyclic phosphodiesterase 3A of Rattus norvegicus (Rat).